The sequence spans 198 residues: Recombination protein RecR (198 aa).

Residues 57–72 (CSICGNLTDEDPCAIC) form a C4-type zinc finger. The 96-residue stretch at 80–175 (STILIVEDSR…KVTRLARGLA (96 aa)) folds into the Toprim domain.

It belongs to the RecR family.

Functionally, may play a role in DNA repair. It seems to be involved in an RecBC-independent recombinational process of DNA repair. It may act with RecF and RecO. This chain is Recombination protein RecR, found in Streptococcus gordonii (strain Challis / ATCC 35105 / BCRC 15272 / CH1 / DL1 / V288).